The following is a 2431-amino-acid chain: Reducing polyketide synthase rads1 (2431 aa).

The 431-residue stretch at 10 to 440 folds into the Ketosynthase family 3 (KS3) domain; it reads RAPIAIIGLA…GTNAHIVLER (431 aa). Active-site for beta-ketoacyl synthase activity residues include C184, H319, and H363. Residues 558 to 895 are malonyl-CoA:ACP transacylase (MAT) domain; sequence FVFTGQGAQW…NLAAELFRRG (338 aa). An N-terminal hotdog fold region spans residues 944-1080; the sequence is KSILGAELPS…GLISIAYEDT (137 aa). The 324-residue stretch at 944-1267 folds into the PKS/mFAS DH domain; the sequence is KSILGAELPS…LAELEVDDAA (324 aa). The segment at 946-1264 is dehydratase (DH) domain; sequence ILGAELPSMD…DFRLAELEVD (319 aa). The active-site Proton acceptor; for dehydratase activity is H976. Positions 1108 to 1267 are C-terminal hotdog fold; the sequence is PETCSKERFY…LAELEVDDAA (160 aa). D1174 functions as the Proton donor; for dehydratase activity in the catalytic mechanism. The enoyl reductase (ER) domain stretch occupies residues 1705–2023; the sequence is GLLNTLHFVP…QGKHLGKMIL (319 aa). The Phosphocysteine intermediate role is filled by C1822. The interval 2048 to 2228 is ketoreductase (KR) domain; sequence ATYLIVGGLG…VSVNLGIMRD (181 aa). In terms of domain architecture, Carrier spans 2346-2423; the sequence is VAAAIITEAL…TFAVQIAKKS (78 aa). At S2383 the chain carries O-(pantetheine 4'-phosphoryl)serine.

Its pathway is secondary metabolite biosynthesis. Functionally, reducing polyketide synthase; part of the gene cluster that mediates the biosynthesis of radicicol, a resorcylic acid lactone (RAL) that irreversibly inhibits the HSP90 molecular chaperone, an important target for cancer chemotherapy. The cluster encodes only two apparent post-PKS enzymes, a cytochrome P450 monooxygenase (radP) and a non-heme halogenase (radH) that introduce the epoxide and the chlorine, respectively. If this cluster includes all the genes required for radicicol biosynthesis, the remaining structural features of radicicol are presumably generated by the PKSs rads1 and rads2. The C-2' ketone could arise if the R-PKS rads1 and NR-PKS rads2 each carry out four iterations, in contrast to the five iteration-three iteration split for the hypothemycin PKSs. The origin of the cis 5',6' double bond is not known. The radicicol R-PKS radS1 ER domain may catalyze either double bond isomerization or reduction in the third iteration. The polypeptide is Reducing polyketide synthase rads1 (Floropilus chiversii (Chaetomium chiversii)).